The primary structure comprises 203 residues: Outer-membrane lipoprotein LolB (203 aa).

An N-terminal signal peptide occupies residues 1–16 (MKTFLPCLFFLLILVG). Cys-17 carries N-palmitoyl cysteine lipidation. A lipid anchor (S-diacylglycerol cysteine) is attached at Cys-17.

Belongs to the LolB family. Monomer.

The protein resides in the cell outer membrane. In terms of biological role, plays a critical role in the incorporation of lipoproteins in the outer membrane after they are released by the LolA protein. The sequence is that of Outer-membrane lipoprotein LolB from Psychromonas ingrahamii (strain DSM 17664 / CCUG 51855 / 37).